Here is a 594-residue protein sequence, read N- to C-terminus: UvrABC system protein C (594 aa).

The 87-residue stretch at 13-99 (NSSGVYQYFD…IKQLKPKYNI (87 aa)) folds into the GIY-YIG domain. The UVR domain occupies 205–240 (DRLIKELELKMERLSSKLRFEEALIYRDRIAKIQKI).

The protein belongs to the UvrC family. Interacts with UvrB in an incision complex.

It localises to the cytoplasm. Functionally, the UvrABC repair system catalyzes the recognition and processing of DNA lesions. UvrC both incises the 5' and 3' sides of the lesion. The N-terminal half is responsible for the 3' incision and the C-terminal half is responsible for the 5' incision. The sequence is that of UvrABC system protein C from Helicobacter pylori (strain P12).